We begin with the raw amino-acid sequence, 221 residues long: ATP phosphoribosyltransferase (221 aa).

The protein belongs to the ATP phosphoribosyltransferase family. Short subfamily. Heteromultimer composed of HisG and HisZ subunits.

It localises to the cytoplasm. The catalysed reaction is 1-(5-phospho-beta-D-ribosyl)-ATP + diphosphate = 5-phospho-alpha-D-ribose 1-diphosphate + ATP. It participates in amino-acid biosynthesis; L-histidine biosynthesis; L-histidine from 5-phospho-alpha-D-ribose 1-diphosphate: step 1/9. In terms of biological role, catalyzes the condensation of ATP and 5-phosphoribose 1-diphosphate to form N'-(5'-phosphoribosyl)-ATP (PR-ATP). Has a crucial role in the pathway because the rate of histidine biosynthesis seems to be controlled primarily by regulation of HisG enzymatic activity. The protein is ATP phosphoribosyltransferase of Carboxydothermus hydrogenoformans (strain ATCC BAA-161 / DSM 6008 / Z-2901).